The following is a 709-amino-acid chain: Dibasic-processing endoprotease (709 aa).

Residues 1–22 (MHPALLCGPILAIFLQFLVSSC) form the signal peptide. Propeptides lie at residues 23-82 (SPLE…IRKR) and 83-102 (GIDA…RYKR). Residues 103–668 (DASESDELLN…QPVLEPSYRE (566 aa)) lie on the Lumenal side of the membrane. Positions 128-440 (QWHIFNSNNP…FGKLDASKFV (313 aa)) constitute a Peptidase S8 domain. N-linked (GlcNAc...) asparagine glycosylation occurs at asparagine 155. Catalysis depends on charge relay system residues aspartate 162 and histidine 200. 2 disulfide bridges follow: cysteine 216–cysteine 363 and cysteine 308–cysteine 338. Serine 371 serves as the catalytic Charge relay system. The P/Homo B domain maps to 449–588 (VNPQTWLIAP…QLALWGESEN (140 aa)). Residues asparagine 463, asparagine 471, and asparagine 620 are each glycosylated (N-linked (GlcNAc...) asparagine). Residues 669–693 (IVAFITFFLLFAFIFVAVIWTWISA) form a helical membrane-spanning segment. At 694 to 709 (FWKAKAPPPLSQQEIA) the chain is on the cytoplasmic side.

The protein belongs to the peptidase S8 family. Furin subfamily. Ca(2+) is required as a cofactor. Post-translationally, N-glycosylated.

Its subcellular location is the golgi apparatus. It is found in the trans-Golgi network membrane. Membrane-bound, subtilisin-like serine protease that processes the P-factor precursor and other precursor proteins. Essential for cell viability. Cleaves substrate on the C-terminal side of dibasic residues. The chain is Dibasic-processing endoprotease (krp1) from Schizosaccharomyces pombe (strain 972 / ATCC 24843) (Fission yeast).